The following is a 309-amino-acid chain: Cilia-and flagella-associated protein 96 (309 aa).

Residues 220–249 form a disordered region; that stretch reads EEKKKTISNTFKPSSPGKKPGGMKAGTFDP.

Belongs to the CFAP96 family. In terms of tissue distribution, detected in testis and fetal liver.

It localises to the cytoplasm. It is found in the cytoskeleton. The protein localises to the microtubule organizing center. The protein resides in the centrosome. The chain is Cilia-and flagella-associated protein 96 from Homo sapiens (Human).